Reading from the N-terminus, the 1068-residue chain is DNA-directed RNA polymerase subunit beta (1068 aa).

Belongs to the RNA polymerase beta chain family. As to quaternary structure, in plastids the minimal PEP RNA polymerase catalytic core is composed of four subunits: alpha, beta, beta', and beta''. When a (nuclear-encoded) sigma factor is associated with the core the holoenzyme is formed, which can initiate transcription.

It localises to the plastid. It is found in the chloroplast. It catalyses the reaction RNA(n) + a ribonucleoside 5'-triphosphate = RNA(n+1) + diphosphate. Functionally, DNA-dependent RNA polymerase catalyzes the transcription of DNA into RNA using the four ribonucleoside triphosphates as substrates. The chain is DNA-directed RNA polymerase subunit beta from Staurastrum punctulatum (Green alga).